Here is a 412-residue protein sequence, read N- to C-terminus: 2,3-bisphosphoglycerate-independent phosphoglycerate mutase (412 aa).

Belongs to the BPG-independent phosphoglycerate mutase family. A-PGAM subfamily.

The catalysed reaction is (2R)-2-phosphoglycerate = (2R)-3-phosphoglycerate. It participates in carbohydrate degradation; glycolysis; pyruvate from D-glyceraldehyde 3-phosphate: step 3/5. Its function is as follows. Catalyzes the interconversion of 2-phosphoglycerate and 3-phosphoglycerate. The polypeptide is 2,3-bisphosphoglycerate-independent phosphoglycerate mutase (Methanobrevibacter smithii (strain ATCC 35061 / DSM 861 / OCM 144 / PS)).